We begin with the raw amino-acid sequence, 278 residues long: Undecaprenyl-diphosphatase 2 (278 aa).

7 helical membrane-spanning segments follow: residues 1–21 (MSIIEAIIIGIVQGITEFLPI), 38–58 (FPGFGFEIFLHIASILAVILY), 85–105 (FMFAIYIIVATGITGVLGLLL), 118–138 (FIAGALIITGTFLIIIERFFV), 191–211 (SFLLSIPVILGTSVLAIGDLL), 223–243 (PLIISFIVTFFFSWLGIIWLI), and 251–271 (LIYFAFYCFALAIFVFFYFDH).

It belongs to the UppP family.

Its subcellular location is the cell membrane. It catalyses the reaction di-trans,octa-cis-undecaprenyl diphosphate + H2O = di-trans,octa-cis-undecaprenyl phosphate + phosphate + H(+). In terms of biological role, catalyzes the dephosphorylation of undecaprenyl diphosphate (UPP). Confers resistance to bacitracin. In Halalkalibacterium halodurans (strain ATCC BAA-125 / DSM 18197 / FERM 7344 / JCM 9153 / C-125) (Bacillus halodurans), this protein is Undecaprenyl-diphosphatase 2.